Here is a 239-residue protein sequence, read N- to C-terminus: Cysteine-rich venom protein 2 (239 aa).

The N-terminal stretch at 1–19 is a signal peptide; that stretch reads MIALIVLPILAAVLQQSSG. The 129-residue stretch at 38–166 folds into the SCP domain; the sequence is VDLHNSLRRS…EYSYFYVCQY (129 aa). Intrachain disulfides connect Cys75–Cys153, Cys92–Cys167, Cys148–Cys164, Cys186–Cys193, Cys189–Cys198, Cys202–Cys234, and Cys219–Cys232. The ShKT domain occupies 198 to 234; it reads CTNPCPKKISTQLPRFGPQAGCQDKQMQSDCSATCFC.

The protein belongs to the CRISP family. In terms of tissue distribution, expressed by the venom gland.

Its subcellular location is the secreted. Functionally, weakly blocks contraction of smooth muscle elicited by high potassium-induced depolarization, but does not block caffeine-stimulated contraction. May target voltage-gated calcium channels on smooth muscle. This is Cysteine-rich venom protein 2 from Sistrurus catenatus edwardsii (Desert massasauga).